The following is a 425-amino-acid chain: Serine/threonine-protein kinase VRK1 (425 aa).

The region spanning Trp38–Leu329 is the Protein kinase domain. ATP contacts are provided by residues Val44–Leu52 and Lys72. Catalysis depends on Asp178, which acts as the Proton acceptor. The segment at Gly343 to Ser425 is disordered. Basic residues predominate over residues Lys415–Ser425.

This sequence belongs to the protein kinase superfamily. CK1 Ser/Thr protein kinase family. VRK subfamily.

It is found in the nucleus. The protein localises to the cytoplasm. It localises to the cajal body. It catalyses the reaction L-seryl-[protein] + ATP = O-phospho-L-seryl-[protein] + ADP + H(+). The enzyme catalyses L-threonyl-[protein] + ATP = O-phospho-L-threonyl-[protein] + ADP + H(+). Functionally, serine/threonine kinase involved in the regulation of key cellular processes including the cell cycle, nuclear condensation, transcription regulation, and DNA damage response. Controls chromatin organization and remodeling by mediating phosphorylation of histone H3 on 'Thr-4' and histone H2AX (H2aXT4ph). It also phosphorylates KAT5 in response to DNA damage, promoting KAT5 association with chromatin and histone acetyltransferase activity. Is involved in the regulation of cell cycle progression of neural progenitors, and is required for proper cortical neuronal migration. Is involved in neurite elongation and branching in motor neurons, and has an essential role in Cajal bodies assembly, acting through COIL phosphorylation and the control of coilin degradation. Involved in Golgi disassembly during the cell cycle: following phosphorylation by PLK3 during mitosis, it is required to induce Golgi fragmentation. Phosphorylates BANF1: disrupts its ability to bind DNA, reduces its binding to LEM domain-containing proteins and causes its relocalization from the nucleus to the cytoplasm. Phosphorylates TP53BP1 and p53/TP53 on 'Thr-18', preventing the interaction between p53/TP53 and MDM2. Phosphorylates ATF2 which activates its transcriptional activity. Phosphorylates JUN. This chain is Serine/threonine-protein kinase VRK1 (vrk1), found in Danio rerio (Zebrafish).